The chain runs to 2170 residues: Supervillin (2170 aa).

Residues 1-167 (MKRKERIARR…NSRHSRTESG (167 aa)) are interaction with MYLK. Disordered regions lie at residues 37-94 (EDTP…HSLE), 107-327 (RRRQ…QSES), 413-444 (PEPL…NKDL), 511-546 (DYTG…GAEA), and 567-643 (RASK…EDEE). S50 carries the post-translational modification Phosphoserine. Polar residues-rich tracts occupy residues 63 to 73 (PGSSLEKQTPS) and 81 to 90 (GIHSSGSMDT). Positions 134–166 (SRKDPDVTERRGKSDKQEEQSKDANSRHSRTES) are enriched in basic and acidic residues. The segment covering 167–195 (GPRTSLVASQDCTPLGSNMSDQEQLLNVE) has biased composition (polar residues). 3 positions are modified to phosphoserine: S220, S227, and S241. The segment covering 230–241 (QIPSSPLQQPAS) has biased composition (polar residues). 2 stretches are compositionally biased toward basic and acidic residues: residues 261–272 (PTHEWFLQRDSE) and 286–297 (KVREKLVKEESA). A compositionally biased stretch (polar residues) spans 298–313 (RSSPELTSESLTQRRQ). Residues S299 and S300 each carry the phosphoserine modification. Positions 427-444 (EDDRLVRGHKDPSGNKDL) are enriched in basic and acidic residues. Composition is skewed to basic and acidic residues over residues 570–582 (KKPE…ERSA) and 606–615 (ESRKTSERFR). Phosphoserine occurs at positions 632, 666, 728, and 761. A disordered region spans residues 743–771 (ASAHQKALARDQANEGRESAEPGEPDSST). A compositionally biased stretch (basic and acidic residues) spans 750–762 (LARDQANEGRESA). Y809 bears the Phosphotyrosine mark. T811 bears the Phosphothreonine mark. S857, S877, and S881 each carry phosphoserine. The disordered stretch occupies residues 887–909 (AWRPLVEHSGSKGMPGESGKTES). A phosphoserine mark is found at S960, S1011, S1031, and S1077. Residues 1117 to 1137 (HTQEVEQSLKKKRVTESRESQ) form a disordered region. A compositionally biased stretch (basic and acidic residues) spans 1119–1137 (QEVEQSLKKKRVTESRESQ). At R1159 the chain carries Omega-N-methylarginine. 2 positions are modified to phosphoserine: S1181 and S1184. T1186 is subject to Phosphothreonine. Phosphoserine is present on residues S1190, S1278, and S1361. Residues 1375 to 1643 (SNINLRSVNL…KFLDWTELKR (269 aa)) form an interaction with NEB region. Gelsolin-like repeat units follow at residues 1397–1496 (KKLM…LGGQ), 1516–1638 (IETN…FLDW), 1708–1818 (VSVD…FQGG), 1837–1938 (WRLY…LGRR), and 1971–2078 (ATEF…FPSW). The HP domain maps to 2107–2170 (KLCKTIYPLA…VNLKKSKGLF (64 aa)).

The protein belongs to the villin/gelsolin family. As to quaternary structure, associates with F-actin. Interacts with NEB. Interacts with MYH9. Interacts with MYLK. Interacts with TASOR. In terms of assembly, interacts with TRIP6. Interacts with DYNLT1. Interacts with KIF14; at midbody during cytokinesis. In terms of tissue distribution, expressed in the heart, tongue and granular cells within the cerebellum.

Its subcellular location is the cell membrane. The protein localises to the cytoplasm. It is found in the cytoskeleton. It localises to the cell projection. The protein resides in the invadopodium. Its subcellular location is the podosome. The protein localises to the midbody. It is found in the cleavage furrow. Forms a high-affinity link between the actin cytoskeleton and the membrane. Is among the first costameric proteins to assemble during myogenesis and it contributes to myogenic membrane structure and differentiation. Appears to be involved in myosin II assembly. May modulate myosin II regulation through MLCK during cell spreading, an initial step in cell migration. May play a role in invadopodial function. In terms of biological role, may be involved in modulation of focal adhesions. Supervillin-mediated down-regulation of focal adhesions involves binding to TRIP6. Plays a role in cytokinesis through KIF14 interaction. The protein is Supervillin (Svil) of Mus musculus (Mouse).